A 530-amino-acid chain; its full sequence is MTSIYHDFIHNKLQSFGRIGRYFVNFVVLAHRFIALHIHPFWIQLSYFLLISILGSVLLMFLKPSNPEFRPGYIDMLFLSTSALTLSSLITIEMEVLSSSQIVVITLLMLLGGEVFVSFLGLMLRLNHKHNPEFSGDKVSSVPIELDTINSASTVISCEELQLEAAIPEVPSSTIKDLKRSKRLRWFLGFVVFSYFVVIHVAGFLLVLWYISRVSSAKAPLKKKGINIALFSFSVTVSSFANVGLVPTNENMAIFSKNPGLLLLFIGQILAGNTLYPLFLRLLIWFLGKVTKLRELKLMIKNPEELQYDYLLPKLPTAFLASTVIGLMASLVTLFGAVDWNSSVFDGLSSYQKIINALFMAVNARHSGENSIDCSLIAPAVLVLFIILMYLPPSTTFALSNGDEKTANKKAKRKLGLVVQNLAFSQLACISVFVIVAFITERSRLRNDPLNFSALNMIFEIISAYGNVGLSTGYSCSRLQKLHPGSICQDKPYSLSGWWSDEGKLLLVFVMLYGRLKAFTKGTGEYWRLW.

The Cytoplasmic segment spans residues 1–40; sequence MTSIYHDFIHNKLQSFGRIGRYFVNFVVLAHRFIALHIHP. The next 2 helical transmembrane spans lie at 41–61 and 102–122; these read FWIQ…LLMF and IVVI…FLGL. Topologically, residues 123–186 are cytoplasmic; the sequence is MLRLNHKHNP…DLKRSKRLRW (64 aa). A run of 2 helical transmembrane segments spans residues 187-207 and 260-280; these read FLGF…FLLV and GLLL…PLFL. The Cytoplasmic portion of the chain corresponds to 281–317; that stretch reads RLLIWFLGKVTKLRELKLMIKNPEELQYDYLLPKLPT. 2 helical membrane-spanning segments follow: residues 318-338 and 372-392; these read AFLA…FGAV and IDCS…MYLP. Residues 393–418 lie on the Cytoplasmic side of the membrane; it reads PSTTFALSNGDEKTANKKAKRKLGLV. The next 2 helical transmembrane spans lie at 419-439 and 494-514; these read VQNL…VAFI and SLSG…MLYG. Topologically, residues 515–530 are cytoplasmic; sequence RLKAFTKGTGEYWRLW.

Belongs to the TrkH potassium transport family. HKT (TC 2.A.38.3) subfamily. As to expression, expressed in epidermis and vascular tissue of endodermis in roots, and in cells surrounding the vasculature in leaves.

Its subcellular location is the membrane. The enzyme catalyses Na(+)(in) = Na(+)(out). Its function is as follows. Seems to be involved in regulation of potassium-sodium homeostasis. Seems to act as a high-affinity sodium transporter, which mediates increased sodium uptake in roots under potassium deficiency and contributes to sodium accumulation and salt toxicity. Involved in nutritional sodium uptake and distribution in potassium-starved roots to allow plant growth. May also act as a potassium transporter. Functions as a sodium-potassium cotransporter. The polypeptide is Cation transporter HKT2;1 (Oryza sativa subsp. indica (Rice)).